We begin with the raw amino-acid sequence, 158 residues long: Methylated-DNA--protein-cysteine methyltransferase (158 aa).

The active-site Nucleophile; methyl group acceptor is the Cys126.

Belongs to the MGMT family.

The protein resides in the cytoplasm. It catalyses the reaction a 6-O-methyl-2'-deoxyguanosine in DNA + L-cysteinyl-[protein] = S-methyl-L-cysteinyl-[protein] + a 2'-deoxyguanosine in DNA. It carries out the reaction a 4-O-methyl-thymidine in DNA + L-cysteinyl-[protein] = a thymidine in DNA + S-methyl-L-cysteinyl-[protein]. Its function is as follows. Involved in the cellular defense against the biological effects of O6-methylguanine (O6-MeG) and O4-methylthymine (O4-MeT) in DNA. Repairs the methylated nucleobase in DNA by stoichiometrically transferring the methyl group to a cysteine residue in the enzyme. This is a suicide reaction: the enzyme is irreversibly inactivated. The polypeptide is Methylated-DNA--protein-cysteine methyltransferase (Methanosarcina mazei (strain ATCC BAA-159 / DSM 3647 / Goe1 / Go1 / JCM 11833 / OCM 88) (Methanosarcina frisia)).